The chain runs to 447 residues: ATP-dependent protease ATPase subunit HslU (447 aa).

Residues Ile-18, 60 to 65, Asp-259, Glu-325, and Arg-397 contribute to the ATP site; that span reads GVGKTE.

Belongs to the ClpX chaperone family. HslU subfamily. A double ring-shaped homohexamer of HslV is capped on each side by a ring-shaped HslU homohexamer. The assembly of the HslU/HslV complex is dependent on binding of ATP.

It localises to the cytoplasm. Its function is as follows. ATPase subunit of a proteasome-like degradation complex; this subunit has chaperone activity. The binding of ATP and its subsequent hydrolysis by HslU are essential for unfolding of protein substrates subsequently hydrolyzed by HslV. HslU recognizes the N-terminal part of its protein substrates and unfolds these before they are guided to HslV for hydrolysis. In Burkholderia ambifaria (strain MC40-6), this protein is ATP-dependent protease ATPase subunit HslU.